The chain runs to 205 residues: Large ribosomal subunit protein uL18 (205 aa).

The protein belongs to the universal ribosomal protein uL18 family. Part of the 50S ribosomal subunit. Contacts the 5S and 23S rRNAs.

This is one of the proteins that bind and probably mediate the attachment of the 5S RNA into the large ribosomal subunit, where it forms part of the central protuberance. This Haloquadratum walsbyi (strain DSM 16790 / HBSQ001) protein is Large ribosomal subunit protein uL18.